Reading from the N-terminus, the 140-residue chain is Interleukin-4 (140 aa).

A signal peptide spans 1–20 (MGLNPQLVVILLFFLECTRS). 3 disulfide bridges follow: C25–C107, C47–C87, and C69–C114. N-linked (GlcNAc...) asparagine glycans are attached at residues N61, N91, and N117.

It belongs to the IL-4/IL-13 family. Interacts with IL4R. Interacts with IL13RA1.

It localises to the secreted. Its function is as follows. Cytokine secreted primarily by mast cells, T-cells, eosinophils, and basophils that plays a role in regulating antibody production, hematopoiesis and inflammation, and the development of effector T-cell responses. Induces the expression of class II MHC molecules on resting B-cells. Enhances both secretion and cell surface expression of IgE and IgG1. Also regulates the expression of the low affinity Fc receptor for IgE (CD23) on both lymphocytes and monocytes. Positively regulates IL31RA expression in macrophages. Stimulates autophagy in dendritic cells by interfering with mTORC1 signaling and through the induction of RUFY4. In addition, plays a critical role in higher functions of the normal brain, such as memory and learning. Upon binding to IL4, IL4R receptor dimerizes either with the common IL2R gamma chain/IL2RG to produce the type 1 signaling complex, located mainly on hematopoietic cells, or with the IL13RA1 to produce the type 2 complex, which is also expressed on nonhematopoietic cells. Engagement of both types of receptors initiates JAK3 and to a lower extend JAK1 phosphorylation leading to activation of the signal transducer and activator of transcription 6/STAT6. In Mus musculus (Mouse), this protein is Interleukin-4 (Il4).